An 82-amino-acid chain; its full sequence is Acyl carrier protein (82 aa).

The region spanning 3 to 78 (QEIFERVKKV…KAVEHISEKV (76 aa)) is the Carrier domain. S38 is modified (O-(pantetheine 4'-phosphoryl)serine).

It belongs to the acyl carrier protein (ACP) family. 4'-phosphopantetheine is transferred from CoA to a specific serine of apo-ACP by AcpS. This modification is essential for activity because fatty acids are bound in thioester linkage to the sulfhydryl of the prosthetic group.

The protein localises to the cytoplasm. It participates in lipid metabolism; fatty acid biosynthesis. Functionally, carrier of the growing fatty acid chain in fatty acid biosynthesis. In Gloeothece citriformis (strain PCC 7424) (Cyanothece sp. (strain PCC 7424)), this protein is Acyl carrier protein.